We begin with the raw amino-acid sequence, 79 residues long: MKTLLLTLVMVTIMCLDLGYTLTCYKGYHDTVVCKPHETICYRYLIPATHGNAIPARGCGTSCPGGNHPVCCSTDLCNK.

A signal peptide spans 1–21 (MKTLLLTLVMVTIMCLDLGYT). 4 disulfides stabilise this stretch: C24/C41, C34/C59, C63/C71, and C72/C77.

This sequence belongs to the three-finger toxin family. Short-chain subfamily. Type III alpha-neurotoxin sub-subfamily. As to expression, expressed by the venom gland.

It is found in the secreted. Its function is as follows. Binds with high affinity to muscle nicotinic acetylcholine receptor (nAChR) and hinders acetylcholine binding to the receptor, thereby impairing neuromuscular transmission. Competes with the binding of alpha-bungarotoxin on muscle AChR (from Torpedo) with an IC(50) of 0.30 uM. Causes muscle paralysis, spasms and increased respiration. This Pseudonaja textilis (Eastern brown snake) protein is Short neurotoxin 2.